The sequence spans 378 residues: Cytochrome b (378 aa).

4 consecutive transmembrane segments (helical) span residues 34–54, 78–99, 114–134, and 179–199; these read FGSL…FLAM, WLLR…YLHV, WLIG…GYVL, and FFTF…IHLL. Residues His-84 and His-98 each coordinate heme b. Positions 183 and 197 each coordinate heme b. Position 202 (His-202) interacts with a ubiquinone. 4 helical membrane-spanning segments follow: residues 227–247, 289–309, 321–341, and 348–368; these read FKDI…VLIS, LGGV…PFYN, INQV…WIGA, and YVLI…VNPL.

Belongs to the cytochrome b family. The main subunits of complex b-c1 are: cytochrome b, cytochrome c1 and the Rieske protein. The cofactor is heme b.

It localises to the mitochondrion inner membrane. In terms of biological role, component of the ubiquinol-cytochrome c reductase complex (complex III or cytochrome b-c1 complex) that is part of the mitochondrial respiratory chain. The b-c1 complex mediates electron transfer from ubiquinol to cytochrome c. Contributes to the generation of a proton gradient across the mitochondrial membrane that is then used for ATP synthesis. The chain is Cytochrome b (mt:Cyt-b) from Drosophila simulans (Fruit fly).